The chain runs to 389 residues: Apicidin F cluster transcription factor apf2 (389 aa).

Composition is skewed to polar residues over residues 1–13 (MSPP…TITD) and 75–84 (PDSATPKPSL). Disordered regions lie at residues 1–27 (MSPP…VAQR), 65–84 (PQSV…KPSL), and 219–239 (EVPN…TKQP). The tract at residues 12–38 (TDANERRKAQNRVAQRNYRSRQKLRVE) is basic DNA-binding region. ANK repeat units follow at residues 241–270 (EFKT…NIDT), 274–303 (HGRT…DLLM), 307–336 (SGVT…QQDR), and 357–386 (QNMT…DVNI).

Belongs to the bZIP family. Highly divergent.

The protein localises to the nucleus. In terms of biological role, transcription factor that regulates the expression of the gene cluster that mediates the biosynthesis of apicidin F. Binds to the eight-base-pair motif 5'-TGACGTGA-3' called the 'Api-box' that is found in all promoters of the apicidin F cluster except in the promoter region of apf2 itself. This is Apicidin F cluster transcription factor apf2 from Gibberella fujikuroi (strain CBS 195.34 / IMI 58289 / NRRL A-6831) (Bakanae and foot rot disease fungus).